The chain runs to 68 residues: Protein SlyX homolog (68 aa).

It belongs to the SlyX family.

This is Protein SlyX homolog from Pseudomonas syringae pv. tomato (strain ATCC BAA-871 / DC3000).